Reading from the N-terminus, the 518-residue chain is UPF0053 inner membrane protein YoaE (518 aa).

The Cytoplasmic portion of the chain corresponds to 1 to 13; that stretch reads MEFLMDPSIWAGL. Residues 14 to 34 traverse the membrane as a helical segment; sequence LTLVVLEIVLGIDNLVFIAIL. Residues 35–48 are Periplasmic-facing; sequence ADKLPPKQRDKARL. Residues 49 to 69 traverse the membrane as a helical segment; it reads LGLSLALIMRLGLLSLISWMV. Residues 70 to 78 lie on the Cytoplasmic side of the membrane; that stretch reads TLTKPLFTV. A helical transmembrane segment spans residues 79–99; that stretch reads MDFSFSGRDLIMLFGGIFLLF. Residues 100-124 are Periplasmic-facing; the sequence is KATTELHERLENRDHDSGHGKGYAS. A helical membrane pass occupies residues 125–145; it reads FWVVVTQIVILDAVFSLDAVI. Residues 146–149 are Cytoplasmic-facing; that stretch reads TAVG. A helical transmembrane segment spans residues 150 to 170; the sequence is MVNHLPVMMAAVVIAMAVMLL. The Periplasmic portion of the chain corresponds to 171-184; sequence ASKPLTRFVNQHPT. A helical membrane pass occupies residues 185-205; that stretch reads VVVLCLSFLLMIGLSLVAEGF. Gly-206 is a topological domain (cytoplasmic). Residues 207–227 traverse the membrane as a helical segment; sequence FHIPKGYLYAAIGFSIIIEVF. At 228-354 the chain is on the periplasmic side; sequence NQIARRNFIR…IGIVRAKELL (127 aa). 2 consecutive CBS domains span residues 304–363 and 367–427; these read MTPR…GVDV and ASAS…DADE. The chain crosses the membrane as a helical span at residues 355–375; sequence VALEEGVDVAAIASASPAIIV. The Cytoplasmic segment spans residues 376–518; that stretch reads PETLDPINLL…KEQPAHDEDE (143 aa).

This sequence belongs to the UPF0053 family.

It is found in the cell inner membrane. This is UPF0053 inner membrane protein YoaE (yoaE) from Escherichia coli O157:H7.